Here is a 227-residue protein sequence, read N- to C-terminus: MSKTFFVTGTDTDAGKTTCTLALLQAAAAKGLKAVAYKPVAAGCEMIENKPCNQDVLLLQKHSALPLQYEQVVAYSFDAFSSPHIAAEESGVTIKLDVLSEGLSRLKKSTGADIIFVEGAGGWRVPIGNGHFLSDWVKYENMPVIMVVGARLGCINHSVLTYEAIHHDMLPLVGWCMNRITPSMNHYQQNLETLKSLLPAPFMGEIPYINKPDEQDLGKYLDISTLL.

Aspartate 13–threonine 18 is a binding site for ATP. Residue threonine 17 coordinates Mg(2+). Lysine 38 is a catalytic residue. ATP is bound by residues aspartate 55, glutamate 118 to glycine 121, asparagine 178 to arginine 179, proline 207 to isoleucine 209, and glutamate 214. Residues aspartate 55 and glutamate 118 each coordinate Mg(2+).

This sequence belongs to the dethiobiotin synthetase family. Homodimer. Mg(2+) serves as cofactor.

The protein resides in the cytoplasm. The enzyme catalyses (7R,8S)-7,8-diammoniononanoate + CO2 + ATP = (4R,5S)-dethiobiotin + ADP + phosphate + 3 H(+). It participates in cofactor biosynthesis; biotin biosynthesis; biotin from 7,8-diaminononanoate: step 1/2. Its function is as follows. Catalyzes a mechanistically unusual reaction, the ATP-dependent insertion of CO2 between the N7 and N8 nitrogen atoms of 7,8-diaminopelargonic acid (DAPA, also called 7,8-diammoniononanoate) to form a ureido ring. The polypeptide is ATP-dependent dethiobiotin synthetase BioD (Tolumonas auensis (strain DSM 9187 / NBRC 110442 / TA 4)).